The primary structure comprises 1186 residues: Tricalbin-1 (1186 aa).

The tract at residues 1 to 50 is disordered; it reads MAKEDTGVTAPKKPETAQVANINGIDKLEPPKTKEETESSKSVSSEKAAH. Over 1–106 the chain is Cytoplasmic; the sequence is MAKEDTGVTA…NIIPDSLYGD (106 aa). The span at 26 to 39 shows a compositional bias: basic and acidic residues; sequence DKLEPPKTKEETES. A helical transmembrane segment spans residues 107-127; that stretch reads WYHSVAIFFIGGVASFALGHY. Residue K128 is a topological domain, extracellular. A helical membrane pass occupies residues 129–149; that stretch reads FSMGSAFFVIVITSLLYRTSA. Topologically, residues 150–1186 are cytoplasmic; that stretch reads KKYRGSIREL…HEMGEEETKF (1037 aa). In terms of domain architecture, SMP-LTD spans 172–375; the sequence is DYESLEWLNA…PPFSLQLNIP (204 aa). C2 domains are found at residues 366–487, 512–636, and 640–757; these read PPFS…RNLK, EKKL…IKIT, and RPVR…DKYE. Positions 795–822 form a coiled coil; sequence LEEIQDLDKVNKKKKALELRKSAIDEKK. Residues 976 to 1094 form the C2 4 domain; it reads PIDTKQLPAN…KVEGTTELDV (119 aa). S1000 carries the phosphoserine modification. 6 residues coordinate Ca(2+): D1008, D1014, D1064, D1066, S1069, and D1072.

Belongs to the tricalbin family. Interacts with TCB2 via its C-terminal domain. Ca(2+) serves as cofactor.

It is found in the cell membrane. The protein resides in the endoplasmic reticulum membrane. In terms of biological role, may play a role in membrane trafficking. The chain is Tricalbin-1 (TCB1) from Saccharomyces cerevisiae (strain ATCC 204508 / S288c) (Baker's yeast).